The sequence spans 520 residues: Cytochrome P450 monooxygenase vrtE (520 aa).

The helical transmembrane segment at 16–36 (ALSLLHYVLGAIFLLLLFHML) threads the bilayer. The N-linked (GlcNAc...) asparagine glycan is linked to Asn-137. Cys-459 contacts heme.

This sequence belongs to the cytochrome P450 family. Requires heme as cofactor.

It is found in the membrane. It functions in the pathway secondary metabolite biosynthesis; terpenoid biosynthesis. Its function is as follows. Cytochrome P450 monooxygenase; part of the gene cluster that mediates the biosynthesis of viridicatumtoxin, a tetracycline-like fungal meroterpenoid with a unique, fused spirobicyclic ring system. The first step of the pathway is the production of the malonamoyl-CoA starter unit for the polyketide synthase vrtA. The aldolase vrtJ may be involved in the synthesis of the malonamate substrate for malonamoyl-CoA synthetase vrtB. The polyketide synthase vrtA then may utilize the malonamoyl-CoA starter unit, followed by sequential condensation of eight malonyl-CoA units to form the polyketide backbone. The cyclization of the last ring could be mediated by the lactamase-like protein vrtG. The proposed post-PKS tailoring steps are a hydroxylation at C5 catalyzed the cytochrome P450 monooxygenase vrtE, a hydroxylation at C12a catalyzed by VrtH and/or VrtI, and an O-methylation by the O-methyltransferase vrtF. VrtC is then proposed to catalyze the transfer of a geranyl group synthesized by vrtD to the aromatic C ring of the tetracyclic polyketide intermediate of viridicatumtoxin to yield previridicatumtoxin. Finally, the cytochrome P450 monooxygenase vrtK catalyzes the spirocyclization of the geranyl moiety of previridicatumtoxin to afford viridicatumtoxin. In Penicillium aethiopicum, this protein is Cytochrome P450 monooxygenase vrtE.